The sequence spans 245 residues: MTETKTLVLIPARMAATRLPGKPLMDIAGLPMIVHVLRRAEAAAIGPVAVATDTAEIADVVTAHGGRVVMTRADHPSGSDRIFEALSKLDPDGAVETVVNLQGDFPTIQPDNIRAVLEPLADPAVDIATLAAQIHTEEESLNPNVVKVIGSPLGDRRLRALYFTRATAPWGDGPRYHHIGLYAYRRAALQRFVSLPPSPLERREKLEQLRALEAGMRIDVGIVDAVPRGVDTAADLETARRVLAH.

The protein belongs to the KdsB family.

The protein localises to the cytoplasm. The enzyme catalyses 3-deoxy-alpha-D-manno-oct-2-ulosonate + CTP = CMP-3-deoxy-beta-D-manno-octulosonate + diphosphate. It participates in nucleotide-sugar biosynthesis; CMP-3-deoxy-D-manno-octulosonate biosynthesis; CMP-3-deoxy-D-manno-octulosonate from 3-deoxy-D-manno-octulosonate and CTP: step 1/1. Its pathway is bacterial outer membrane biogenesis; lipopolysaccharide biosynthesis. Its function is as follows. Activates KDO (a required 8-carbon sugar) for incorporation into bacterial lipopolysaccharide in Gram-negative bacteria. This Rhodopseudomonas palustris (strain BisB18) protein is 3-deoxy-manno-octulosonate cytidylyltransferase.